The chain runs to 85 residues: Large ribosomal subunit protein bL27 (85 aa).

A disordered region spans residues 1-23 (MAHKKGQGSTQNNRDSAGRRLGV).

The protein belongs to the bacterial ribosomal protein bL27 family.

The chain is Large ribosomal subunit protein bL27 from Aliarcobacter butzleri (strain RM4018) (Arcobacter butzleri).